Consider the following 235-residue polypeptide: Probable transcriptional regulatory protein Ccur92_05350 (235 aa).

It belongs to the TACO1 family.

The protein localises to the cytoplasm. The polypeptide is Probable transcriptional regulatory protein Ccur92_05350 (Campylobacter curvus (strain 525.92)).